A 257-amino-acid polypeptide reads, in one-letter code: Transcription factor bHLH55 (257 aa).

Positions 74–126 (NKRAKHKELERQRRQENTSLFKILRYLLPSQYIKGKRSSADHVLEAVNYIKDL) constitute a bHLH domain.

As to quaternary structure, homodimer. Expressed in roots, leaves, stems, and flowers.

It localises to the nucleus. The chain is Transcription factor bHLH55 (BHLH55) from Arabidopsis thaliana (Mouse-ear cress).